A 362-amino-acid polypeptide reads, in one-letter code: DNA replication and repair protein RecF (362 aa).

Gly30–Thr37 lines the ATP pocket.

The protein belongs to the RecF family.

It is found in the cytoplasm. The RecF protein is involved in DNA metabolism; it is required for DNA replication and normal SOS inducibility. RecF binds preferentially to single-stranded, linear DNA. It also seems to bind ATP. The protein is DNA replication and repair protein RecF of Agathobacter rectalis (strain ATCC 33656 / DSM 3377 / JCM 17463 / KCTC 5835 / VPI 0990) (Eubacterium rectale).